The chain runs to 503 residues: MHSLSSALAGSTFVLLFLCLLASAQPLTTPNPARALPDALTGGSSIFSCPAASWPPTRIGSPNRPQRPSRELRSILSQISHKRIEASILKLVSFGTRHTLSTQTNATHGIGAARDWIASEFKRYADASDGRLSVDVIGYEQQPDGNRIPFPVRISDVVATLKGTEEPERIYLISGHYDSRVTDVNDYTSFAPGANDDASGVAVSLELARVMSQPHFPRPRATLVFAAVAGEEQGLYGSRFLAETYRNKSANIEGMFTNDIVGSSTADDGTRDPHVVRLFGQGLPPLTVEDQKQRETRLTIGGENDTPARQLSRFVKETAENEHTDMRVSVIYRLDRYLRGGDHRPFLEAGYPAARFTEPHENFAHQHQDVRVETDPKTGRKKQYGDLPEFCDFRYIARVGKVNAAALWSLANSPGMPRNVRVSTRDLSNDSKFFWDPPVGGNEGVGGYEIVWRSTVAPFWTHVLDVGMAREATVDLSKDNVIFGIRARGKNGERGVAVLPFPA.

The first 24 residues, 1-24 (MHSLSSALAGSTFVLLFLCLLASA), serve as a signal peptide directing secretion. An N-linked (GlcNAc...) asparagine glycan is attached at Asn105. Residues His176, Asp196, and Glu232 each contribute to the Zn(2+) site. Asn247 is a glycosylation site (N-linked (GlcNAc...) asparagine). Asp259 contacts Zn(2+). In terms of domain architecture, Fibronectin type-III spans 416–503 (MPRNVRVSTR…RGVAVLPFPA (88 aa)). The N-linked (GlcNAc...) asparagine glycan is linked to Asn429.

This sequence belongs to the peptidase M28 family. M28B subfamily. Zn(2+) serves as cofactor.

Its subcellular location is the secreted. The polypeptide is Probable zinc metalloprotease UREG_01421 (Uncinocarpus reesii (strain UAMH 1704)).